Consider the following 349-residue polypeptide: RING-H2 finger protein ATL48 (349 aa).

The region spanning 1 to 85 (MSSVEPDMED…DNPWKKLLLS (85 aa)) is the HIG1 domain. Ser-2 bears the N-acetylserine mark. 3 helical membrane passes run 21-41 (PLVP…LISF), 55-75 (ARVV…YYYG), and 121-141 (CLVI…YLIF). The RING-type; atypical zinc finger occupies 207–249 (CAVCLNEFSDTDKLRLLPVCSHAFHLHCIDTWLLSNSTCPLCR).

It belongs to the RING-type zinc finger family. ATL subfamily.

It is found in the membrane. It carries out the reaction S-ubiquitinyl-[E2 ubiquitin-conjugating enzyme]-L-cysteine + [acceptor protein]-L-lysine = [E2 ubiquitin-conjugating enzyme]-L-cysteine + N(6)-ubiquitinyl-[acceptor protein]-L-lysine.. It functions in the pathway protein modification; protein ubiquitination. The polypeptide is RING-H2 finger protein ATL48 (ATL48) (Arabidopsis thaliana (Mouse-ear cress)).